The chain runs to 972 residues: Aminopeptidase Ey (972 aa).

At 2–10 the chain is on the cytoplasmic side; sequence AAGFFISKS. The helical; Signal-anchor for type II membrane protein transmembrane segment at 11–31 threads the bilayer; sequence VGIVGIVLALGAVATIIALSV. At 32 to 972 the chain is on the extracellular side; the sequence is VYAQEKNKSS…AWFRAETASS (941 aa). A cytosolic Ser/Thr-rich junction region spans residues 33–72; sequence YAQEKNKSSGGSGGSDTTSTTTASTTTTSTTTASTTAAPN. Positions 37–77 are disordered; it reads KNKSSGGSGGSDTTSTTTASTTTTSTTTASTTAAPNNPWNR. A glycan (N-linked (GlcNAc...) asparagine) is linked at Asn-38. A compositionally biased stretch (low complexity) spans 47–70; the sequence is SDTTSTTTASTTTTSTTTASTTAA. The interval 73–967 is metalloprotease; sequence NPWNRWRLPT…KEVVHAWFRA (895 aa). N-linked (GlcNAc...) asparagine glycosylation is found at Asn-110, Asn-132, Asn-147, Asn-206, Asn-269, and Asn-296. 355–359 contacts substrate; the sequence is GAMEN. Residue His-391 participates in Zn(2+) binding. Glu-392 acts as the Proton acceptor in catalysis. Zn(2+) is bound by residues His-395 and Glu-414. N-linked (GlcNAc...) asparagine glycosylation is found at Asn-513, Asn-574, Asn-584, Asn-628, Asn-684, and Asn-742. A disulfide bond links Cys-764 and Cys-771. Asn-785 carries N-linked (GlcNAc...) asparagine glycosylation. A disulfide bridge links Cys-801 with Cys-837.

This sequence belongs to the peptidase M1 family. As to quaternary structure, homodimer. Zn(2+) is required as a cofactor. Detected in the plasma and granule fractions of egg yolk (at protein level).

Its subcellular location is the cell membrane. The enzyme catalyses Differs from other aminopeptidases in broad specificity for amino acids in the P1 position and the ability to hydrolyze peptides of four or five residues that contain Pro in the P1' position.. Functionally, broad specificity aminopeptidase. Degrades a variety of peptides possessing various N-terminal amino acids including hydrophobic, basic and acidic amino acids. Preferentially hydrolyzes small peptides consisting of 4 or 5 amino acids. Hydrolyzes the N-terminal Xaa-Pro bonds in the chicken brain peptide Leu-Pro-Leu-Arg-PheNH2, the substance P fragment Arg-Pro-Lys-Pro and the bradykinin fragment Arg-Pro-Pro-Gly-Phe. Hydrolyzes the N-formylated peptides fMet-Leu-Phe, fMet-Ala-Gly-Ser-Glu and fMet-Nle-Leu-Phe-Nle-Tyr-Lys, but does not hydrolyze peptides with acetylation or pyroglutamic acid at N-terminus. Does not hydrolyze large peptides such as complete substance P, bradykinin or schistoFLRFamide. This chain is Aminopeptidase Ey (ANPEP), found in Gallus gallus (Chicken).